A 420-amino-acid chain; its full sequence is uncharacterized protein (420 aa).

Disordered regions lie at residues 84–103 (RSQANSESTPPEHTWSGTSE) and 122–211 (SMNN…NKKS). Positions 85–103 (SQANSESTPPEHTWSGTSE) are enriched in polar residues. Residues 184 to 199 (SMTDQEVEQRRKEANK) show a composition bias toward basic and acidic residues. Coiled coils occupy residues 265 to 310 (TEKE…TATN) and 345 to 374 (LQFKIKKFERREKLLEEVENQIKQYFNFKE). The span at 399–408 (KTSSPKTSIA) shows a compositional bias: polar residues. The segment at 399–420 (KTSSPKTSIAGSHRRSTRSSEN) is disordered. The segment covering 410–420 (SHRRSTRSSEN) has biased composition (basic residues).

This is an uncharacterized protein from Caenorhabditis elegans.